The primary structure comprises 113 residues: Putative increased recombination centers protein 14 (113 aa).

This is Putative increased recombination centers protein 14 (IRC14) from Saccharomyces cerevisiae (strain ATCC 204508 / S288c) (Baker's yeast).